Reading from the N-terminus, the 250-residue chain is Probable replication-associated protein repA2 (250 aa).

The protein belongs to the IncFII RepA family.

In terms of biological role, this protein is essential for plasmid replication; it is involved in copy control functions. This chain is Probable replication-associated protein repA2 (repA2), found in Buchnera aphidicola subsp. Acyrthosiphon pisum (strain APS) (Acyrthosiphon pisum symbiotic bacterium).